The chain runs to 183 residues: Dual-action ribosomal maturation protein DarP (183 aa).

Belongs to the DarP family.

It localises to the cytoplasm. Member of a network of 50S ribosomal subunit biogenesis factors which assembles along the 30S-50S interface, preventing incorrect 23S rRNA structures from forming. Promotes peptidyl transferase center (PTC) maturation. In Escherichia coli O6:H1 (strain CFT073 / ATCC 700928 / UPEC), this protein is Dual-action ribosomal maturation protein DarP.